A 309-amino-acid chain; its full sequence is UDP-N-acetylenolpyruvoylglucosamine reductase (309 aa).

Residues 34–199 (RVGGPAQVLF…TSARLRGTPA (166 aa)) enclose the FAD-binding PCMH-type domain. Arginine 179 is an active-site residue. Catalysis depends on serine 228, which acts as the Proton donor. Glutamate 298 is a catalytic residue.

This sequence belongs to the MurB family. It depends on FAD as a cofactor.

It localises to the cytoplasm. It carries out the reaction UDP-N-acetyl-alpha-D-muramate + NADP(+) = UDP-N-acetyl-3-O-(1-carboxyvinyl)-alpha-D-glucosamine + NADPH + H(+). It participates in cell wall biogenesis; peptidoglycan biosynthesis. In terms of biological role, cell wall formation. The chain is UDP-N-acetylenolpyruvoylglucosamine reductase from Rhodopseudomonas palustris (strain ATCC BAA-98 / CGA009).